The following is a 208-amino-acid chain: MSKVLFVKGNPRSVDESVSVKMYQTFVDTYKEANPNDEVIELDIYNEQLPYLDSTMLAGIFKAGQQLELTAEEEEARKVADRYLTQFVEADKVVFAFPLWNFTIPAALHTYMDYLARAGVTFNYTAEGPVGLMGDKKVALLNARGGYYSEGPAAQLEMSLNYMKTMVGFFGVQDPVTVVIEGHNAVPDQAEEIINKGLEEVKKVAQSF.

Residue 17-19 participates in FMN binding; it reads SVS.

This sequence belongs to the azoreductase type 1 family. In terms of assembly, homodimer. It depends on FMN as a cofactor.

The catalysed reaction is 2 a quinone + NADH + H(+) = 2 a 1,4-benzosemiquinone + NAD(+). The enzyme catalyses N,N-dimethyl-1,4-phenylenediamine + anthranilate + 2 NAD(+) = 2-(4-dimethylaminophenyl)diazenylbenzoate + 2 NADH + 2 H(+). Quinone reductase that provides resistance to thiol-specific stress caused by electrophilic quinones. In terms of biological role, also exhibits azoreductase activity. Catalyzes the reductive cleavage of the azo bond in aromatic azo compounds to the corresponding amines. The sequence is that of FMN-dependent NADH:quinone oxidoreductase 2 from Halalkalibacterium halodurans (strain ATCC BAA-125 / DSM 18197 / FERM 7344 / JCM 9153 / C-125) (Bacillus halodurans).